A 217-amino-acid chain; its full sequence is 2-phospho-L-lactate guanylyltransferase (217 aa).

The protein belongs to the CofC family. In terms of assembly, homodimer.

It carries out the reaction (2S)-2-phospholactate + GTP + H(+) = (2S)-lactyl-2-diphospho-5'-guanosine + diphosphate. The protein operates within cofactor biosynthesis; coenzyme F420 biosynthesis. Functionally, guanylyltransferase that catalyzes the activation of (2S)-2-phospholactate (2-PL) as (2S)-lactyl-2-diphospho-5'-guanosine, via the condensation of 2-PL with GTP. It is involved in the biosynthesis of coenzyme F420, a hydride carrier cofactor. The chain is 2-phospho-L-lactate guanylyltransferase from Halorubrum lacusprofundi (strain ATCC 49239 / DSM 5036 / JCM 8891 / ACAM 34).